The sequence spans 376 residues: Chaperone protein DnaJ (376 aa).

The 66-residue stretch at 5–70 (DYYEVLGVGR…DKKAAYDQFG (66 aa)) folds into the J domain. A CR-type zinc finger spans residues 132-210 (GLTKELRIPT…CHGDGRVEKS (79 aa)). The Zn(2+) site is built by Cys-145, Cys-148, Cys-162, Cys-165, Cys-184, Cys-187, Cys-198, and Cys-201. CXXCXGXG motif repeat units follow at residues 145 to 152 (CDLCDGSG), 162 to 169 (CTTCHGQG), 184 to 191 (CPTCHGRG), and 198 to 205 (CTKCHGDG).

It belongs to the DnaJ family. As to quaternary structure, homodimer. The cofactor is Zn(2+).

It is found in the cytoplasm. Participates actively in the response to hyperosmotic and heat shock by preventing the aggregation of stress-denatured proteins and by disaggregating proteins, also in an autonomous, DnaK-independent fashion. Unfolded proteins bind initially to DnaJ; upon interaction with the DnaJ-bound protein, DnaK hydrolyzes its bound ATP, resulting in the formation of a stable complex. GrpE releases ADP from DnaK; ATP binding to DnaK triggers the release of the substrate protein, thus completing the reaction cycle. Several rounds of ATP-dependent interactions between DnaJ, DnaK and GrpE are required for fully efficient folding. Also involved, together with DnaK and GrpE, in the DNA replication of plasmids through activation of initiation proteins. This is Chaperone protein DnaJ from Shewanella putrefaciens (strain CN-32 / ATCC BAA-453).